We begin with the raw amino-acid sequence, 465 residues long: Putative F-box/LRR-repeat protein At3g28410 (465 aa).

The F-box domain maps to 27–73; that stretch reads ADFINYMPDDILHHILSFIPTDLAMRTSVLSRRWRHVWCETPCLDIK. LRR repeat units lie at residues 127–155, 178–203, 207–225, 278–302, 332–357, 402–427, and 447–465; these read VRDFTYTKTYRFPDIFYISSSLKQLDVTL, FCQIPDESMHNILSGCPILESLTLDT, LERLDLSKSPNLRRLDINR, ADRYQTMALEMLSKFHNVKRLTVGE, FVRSVIPGISRLLQNSPGLKKLTLHT, TSKLVASFMNLVLRNAKTLERMVVWL, and VETLSHNNNVSILLKQSNC.

This Arabidopsis thaliana (Mouse-ear cress) protein is Putative F-box/LRR-repeat protein At3g28410.